We begin with the raw amino-acid sequence, 325 residues long: uncharacterized protein (325 aa).

Residues 296 to 325 are disordered; sequence QRTLSSSMEEADRPRRMSVTQPHLPPVPSA.

The protein belongs to the NDRG family.

This is an uncharacterized protein from Caenorhabditis elegans.